The chain runs to 315 residues: DDRGK domain-containing protein 1 (315 aa).

A helical transmembrane segment spans residues 1 to 28 (MVGPWVYLVAAVLLIGLILFLTRSRGRA). The mediates interaction with CDK5RAP3 stretch occupies residues 1–115 (MVGPWVYLVA…IEKPAEVHPT (115 aa)). Residues 29–315 (AAADGEPLHN…GQDLPAQASA (287 aa)) are Cytoplasmic-facing. Residues 30 to 184 (AADGEPLHNE…ERKAQEEQAR (155 aa)) are disordered. Positions 34 to 43 (EPLHNEEERA) are enriched in basic and acidic residues. Phosphoserine is present on Ser-73. The interval 119-217 (GAKKLRKLEE…MTEEQSHSFL (99 aa)) is mediates interaction with TRIP4. The span at 125–184 (KLEEKQARKAQREAEEAEREERKRLESQREAEWKKEEERLRLKEEQKEEEERKAQEEQAR) shows a compositional bias: basic and acidic residues. A UFM1-interacting motif (UFIM) motif is present at residues 196–210 (AFVVEEEGVSETMTE). The interval 217 to 315 (LTEFINYIKK…GQDLPAQASA (99 aa)) is mediates interaction with UFL1. One can recognise a PCI domain in the interval 230–274 (VLLEDLAFQMGLRTQDAINRIQDLLTEGTLTGVIDDRGKFIYITP). A Glycyl lysine isopeptide (Lys-Gly) (interchain with G-Cter in UFM1) cross-link involves residue Lys-268.

It belongs to the DDRGK1 family. In terms of assembly, component of the UFM1 ribosome E3 ligase (UREL) complex, composed of UFL1, DDRGK1 and CDK5RAP3. Interacts with (unphosphorylated) ERN1/IRE1-alpha; interaction is dependent on UFM1 and takes place in response to endoplasmic reticulum stress, regulating ERN1/IRE1-alpha stability. Interacts with NFKBIA. Interacts with SOX9. In terms of processing, ufmylated; conjugated to ubiquitin-like protein UFM1, probably at Lys-268 by UFL1. The relevance of ufmylation is however unclear: as DDRGK1 acts as a substrate adapter for ufmylation, it is uncertain whether ufmylation is a collateral effect of the ufmylation process or whether it is required to regulate its activity. Post-translationally, ubiquitinated. Ubiquitination probably triggers proteasomal degradation and is negatively regulated by UFL1, the enzyme involved in the ufmylation of DDRGK1. As to expression, ubiquitously expressed. Higher expression in pancreatic islets, pancreatic acini and testis (at protein level). Highly expressed in the intestinal exocrine cells.

The protein resides in the endoplasmic reticulum membrane. In terms of biological role, component of the UFM1 ribosome E3 ligase (UREL) complex, a multiprotein complex that catalyzes ufmylation of endoplasmic reticulum-docked proteins. The UREL complex plays a key role in ribosome recycling by mediating mono-ufmylation of the RPL26/uL24 subunit of the 60S ribosome following ribosome dissociation: ufmylation weakens the junction between post-termination 60S subunits and SEC61 translocons, promoting release and recycling of the large ribosomal subunit from the endoplasmic reticulum membrane. Ufmylation of RPL26/uL24 and subsequent 60S ribosome recycling either take place after normal termination of translation or after ribosome stalling during cotranslational translocation at the endoplasmic reticulum. Within the UREL complex, DDRGK1 tethers the complex to the endoplasmic reticulum membrane to restrict its activity to endoplasmic reticulum-docked ribosomes and acts as an ufmylation 'reader': following RPL26/uL24 ufmylation, DDRGK1 specifically binds to ufmylated RPL26/uL24 via its UFIM motif, resulting in stable association between the 60S ribosome and the UREL complex, followed by dissociation of the 60S ribosome subunit from the endoplasmic reticulum membrane. The UREL complex is also involved in reticulophagy in response to endoplasmic reticulum stress by promoting ufmylation of proteins such as CYB5R3 and RPN1, thereby promoting lysosomal degradation of ufmylated proteins. Ufmylation-dependent reticulophagy inhibits the unfolded protein response (UPR) by regulating ERN1/IRE1-alpha stability. Acts as a regulator of immunity by promoting differentiation of B-cells into plasma cells: acts by promoting expansion of the endoplasmic reticulum and regulating the unfolded protein response (UPR). May also be required for TRIP4 ufmylation. May play a role in NF-kappa-B-mediated transcription through regulation of the phosphorylation and the degradation of NFKBIA, the inhibitor of NF-kappa-B. Plays a role in cartilage development through SOX9, inhibiting the ubiquitin-mediated proteasomal degradation of this transcriptional regulator. Required for stabilization and ufmylation of ATG9A. The chain is DDRGK domain-containing protein 1 from Mus musculus (Mouse).